The primary structure comprises 113 residues: MTEKKNRREKKNPREAKVTFEGLVTEALPNGMFRVRLENDTIILGYISGKIRSSSIRILMGDRVKIEVSRYDSSKGRIIYRLPHKDSKRIEDSKDSEDLKDSEDLKDTKDSKD.

In terms of domain architecture, S1-like spans 8–83 (REKKNPREAK…SKGRIIYRLP (76 aa)). The segment at 86-113 (DSKRIEDSKDSEDLKDSEDLKDTKDSKD) is disordered.

The protein belongs to the IF-1 family. As to quaternary structure, component of the 30S ribosomal translation pre-initiation complex which assembles on the 30S ribosome in the order IF-2 and IF-3, IF-1 and N-formylmethionyl-tRNA(fMet); mRNA recruitment can occur at any time during PIC assembly.

The protein localises to the plastid. It is found in the chloroplast. One of the essential components for the initiation of protein synthesis. Stabilizes the binding of IF-2 and IF-3 on the 30S subunit to which N-formylmethionyl-tRNA(fMet) subsequently binds. Helps modulate mRNA selection, yielding the 30S pre-initiation complex (PIC). Upon addition of the 50S ribosomal subunit IF-1, IF-2 and IF-3 are released leaving the mature 70S translation initiation complex. The sequence is that of Translation initiation factor IF-1, chloroplastic from Hordeum vulgare (Barley).